A 351-amino-acid chain; its full sequence is Protein FAM118B (351 aa).

Position 2 is an N-acetylalanine (alanine 2). Serine 9 is subject to Phosphoserine.

The protein belongs to the FAM118 family.

The protein resides in the nucleus. It is found in the cajal body. May play a role in Cajal bodies formation. In Homo sapiens (Human), this protein is Protein FAM118B (FAM118B).